Here is a 288-residue protein sequence, read N- to C-terminus: ATP synthase gamma chain (288 aa).

It belongs to the ATPase gamma chain family. In terms of assembly, F-type ATPases have 2 components, CF(1) - the catalytic core - and CF(0) - the membrane proton channel. CF(1) has five subunits: alpha(3), beta(3), gamma(1), delta(1), epsilon(1). CF(0) has three main subunits: a, b and c.

It is found in the cell membrane. Its function is as follows. Produces ATP from ADP in the presence of a proton gradient across the membrane. The gamma chain is believed to be important in regulating ATPase activity and the flow of protons through the CF(0) complex. The sequence is that of ATP synthase gamma chain from Macrococcus caseolyticus (strain JCSC5402) (Macrococcoides caseolyticum).